We begin with the raw amino-acid sequence, 602 residues long: MQSERQKHIRNFCIVAHIDHGKSTLADRLLEHTGTLTHREMEEQVLDNMEIERERGITIKSQAARLIYKRPEDGQEYILNLIDTPGHVDFNYEVSRSLAACEGAVLVVDATQGIQAQTLANCYMAVDHGLEVVPVINKIDLPSARPDEIKNEIEDVIGIESSDAPLISAKTGLNIEDVLEAVVQKVPAPSGDEKGPLKALIFDSYYDSYKGVVCHIRIKDGTVKAGTRIKLMAANKEYEVIEVGVFVPNYLKVEELKAGDVGYITASIKNVRDARVGDTITEVNNPAKEPLLGYRPAISMVYSGIYPIDSSKYEELKEALEKLQVNDAALNFEPETSIALGFGFRCGFLGLLHMEIMQERIEKEFNLDVIMTAPSVIYKVKKTDGTLIEITNPTNLPEPTEIDYMEEPVVKAQIITPSDFVGAVMELCQNKRGTFIDMEYIETTRVMLNYRVPLNEIIYDFFDSLKSRTKGYASFDYELDGYMRTELVKLDIILNSEVVDALSMIVPKDRAYAKGRTMAEKLKEIIPRQLFEIPIQAAVGSKIIARETVKALRKDVLAKCYGGDISRKRKLLEKQKEGKKRMRQVGSVEVPQEAFMSILKND.

The tr-type G domain maps to 7-190; the sequence is KHIRNFCIVA…AVVQKVPAPS (184 aa). Residues 19 to 24 and 137 to 140 each bind GTP; these read DHGKST and NKID.

This sequence belongs to the TRAFAC class translation factor GTPase superfamily. Classic translation factor GTPase family. LepA subfamily.

The protein localises to the cell membrane. It carries out the reaction GTP + H2O = GDP + phosphate + H(+). Required for accurate and efficient protein synthesis under certain stress conditions. May act as a fidelity factor of the translation reaction, by catalyzing a one-codon backward translocation of tRNAs on improperly translocated ribosomes. Back-translocation proceeds from a post-translocation (POST) complex to a pre-translocation (PRE) complex, thus giving elongation factor G a second chance to translocate the tRNAs correctly. Binds to ribosomes in a GTP-dependent manner. This is Elongation factor 4 from Clostridium acetobutylicum (strain ATCC 824 / DSM 792 / JCM 1419 / IAM 19013 / LMG 5710 / NBRC 13948 / NRRL B-527 / VKM B-1787 / 2291 / W).